We begin with the raw amino-acid sequence, 356 residues long: Sterol-4-alpha-carboxylate 3-dehydrogenase, decarboxylating (356 aa).

Met-1 carries the post-translational modification N-acetylmethionine. Tyr-155 acts as the Proton acceptor in catalysis. Lys-159 contacts NAD(+). A helical membrane pass occupies residues 281-301 (WLAYYLALLVSLLVMVISPVI). Positions 353–356 (RKVM) match the Prevents secretion from ER motif.

This sequence belongs to the 3-beta-HSD family. As to quaternary structure, homodimer.

Its subcellular location is the endoplasmic reticulum membrane. The protein localises to the lipid droplet. It catalyses the reaction a 3beta-hydroxysteroid-4alpha-carboxylate + NADP(+) = a 3-oxosteroid + CO2 + NADPH. The enzyme catalyses a 3beta-hydroxysteroid-4alpha-carboxylate + NAD(+) = a 3-oxosteroid + CO2 + NADH. It carries out the reaction 4alpha-carboxyzymosterol + NADP(+) = zymosterone + CO2 + NADPH. The catalysed reaction is 4alpha-carboxy-4beta-methyl-5alpha-cholest-8-en-3beta-ol + NADP(+) = 4alpha-methyl-5alpha-cholest-8-en-3-one + CO2 + NADPH. It catalyses the reaction 4alpha-carboxy-5alpha-cholest-8-ene-3beta-ol + NADP(+) = 5alpha-cholest-8-en-3-one + CO2 + NADPH. The enzyme catalyses 4beta-methylzymosterol-4alpha-carboxylate + NADP(+) = 3-dehydro-4-methylzymosterol + CO2 + NADPH. It carries out the reaction 4beta-methylzymosterol-4alpha-carboxylate + NAD(+) = 3-dehydro-4-methylzymosterol + CO2 + NADH. The catalysed reaction is 4alpha-carboxy-5alpha-cholest-8-ene-3beta-ol + NAD(+) = 5alpha-cholest-8-en-3-one + CO2 + NADH. It catalyses the reaction 4alpha-carboxy-4beta-methyl-5alpha-cholest-8-en-3beta-ol + NAD(+) = 4alpha-methyl-5alpha-cholest-8-en-3-one + CO2 + NADH. The enzyme catalyses 4alpha-carboxyzymosterol + NAD(+) = zymosterone + CO2 + NADH. It participates in steroid biosynthesis; zymosterol biosynthesis; zymosterol from lanosterol: step 4/6. Functionally, catalyzes the NAD(P)(+)-dependent oxidative decarboxylation of the C4 methyl groups of 4-alpha-carboxysterols in post-squalene cholesterol biosynthesis. Also plays a role in the regulation of the endocytic trafficking of EGFR. The chain is Sterol-4-alpha-carboxylate 3-dehydrogenase, decarboxylating (NSDHL) from Bos taurus (Bovine).